Consider the following 426-residue polypeptide: Endothelin-1 receptor (426 aa).

A signal peptide spans 1 to 20 (METFCLKVTFWVALVGYVIG). Residues 21 to 79 (DHPESYSTNLSTPVDFTTFHGTELSFLVTTHRPTNLALPSNGSMHSYCPQQTKITSAFK) lie on the Extracellular side of the membrane. N29 and N61 each carry an N-linked (GlcNAc...) asparagine glycan. A helical transmembrane segment spans residues 80–101 (YINTVISCTIFIVGMVGNATLL). The Cytoplasmic segment spans residues 102 to 111 (RIIYQNKCMR). A helical transmembrane segment spans residues 112-131 (NGPNALIASLALGDLIYVVI). Over 132–158 (DLPINVFKLLAGRWPFDHNDFGVFLCK) the chain is Extracellular. An intrachain disulfide couples C157 to C238. A helical membrane pass occupies residues 159–180 (LFPFLQKSSVGITVLNLCALSV). Topologically, residues 181-204 (DRYRAVASWSRVQGIGIPLITAIE) are cytoplasmic. Residues 205 to 228 (IVSIWILSFILAIPEAIGFVMVPF) traverse the membrane as a helical segment. Over 229–255 (EYKGEQHKTCMLNATSKFMEFYQDVKD) the chain is Extracellular. Residue N241 is glycosylated (N-linked (GlcNAc...) asparagine). A helical transmembrane segment spans residues 256-277 (WWLFGFYFCMPLVCTAIFYTLM). The Cytoplasmic portion of the chain corresponds to 278–305 (TCEMLNRRNGSLRIALSEHLKQRREVAK). The chain crosses the membrane as a helical span at residues 306–327 (TVFCLVVIFALCWFPLHLSRIL). Residues 328 to 346 (KKTVYDEMDKNRCELLSFL) lie on the Extracellular side of the membrane. A helical membrane pass occupies residues 347-371 (RLMDYIGINLATMNSCINPIALYFV). The Cytoplasmic segment spans residues 372–426 (SKKFKNCFQSCLCCCCYQSKSLMTSVPMNGTSIQWKNHEQNNHNTERSSHKDSIN). Phosphoserine is present on S424.

It belongs to the G-protein coupled receptor 1 family. Endothelin receptor subfamily. EDNRA sub-subfamily. In terms of assembly, interacts with HDAC7 and KAT5.

Its subcellular location is the cell membrane. Functionally, receptor for endothelin-1. Mediates its action by association with G proteins that activate a phosphatidylinositol-calcium second messenger system. The rank order of binding affinities for ET-A is: ET1 &gt; ET2 &gt;&gt; ET3. The sequence is that of Endothelin-1 receptor from Canis lupus familiaris (Dog).